Here is a 66-residue protein sequence, read N- to C-terminus: uncharacterized protein (66 aa).

One can recognise an HTH cro/C1-type domain in the interval leucine 5–isoleucine 59. Residues glutamine 16–lysine 35 constitute a DNA-binding region (H-T-H motif).

This is an uncharacterized protein from Methanocaldococcus jannaschii (strain ATCC 43067 / DSM 2661 / JAL-1 / JCM 10045 / NBRC 100440) (Methanococcus jannaschii).